The following is a 294-amino-acid chain: Cytidine deaminase (294 aa).

2 consecutive CMP/dCMP-type deaminase domains span residues 48–168 and 186–294; these read DEDA…FGPK and LTGD…VLLG. 89–91 serves as a coordination point for substrate; that stretch reads NME. Position 102 (His102) interacts with Zn(2+). The Proton donor role is filled by Glu104. The Zn(2+) site is built by Cys129 and Cys132.

It belongs to the cytidine and deoxycytidylate deaminase family. Homodimer. Requires Zn(2+) as cofactor.

It catalyses the reaction cytidine + H2O + H(+) = uridine + NH4(+). It carries out the reaction 2'-deoxycytidine + H2O + H(+) = 2'-deoxyuridine + NH4(+). Its function is as follows. This enzyme scavenges exogenous and endogenous cytidine and 2'-deoxycytidine for UMP synthesis. In Salmonella choleraesuis (strain SC-B67), this protein is Cytidine deaminase.